Reading from the N-terminus, the 436-residue chain is Trigger factor (436 aa).

The PPIase FKBP-type domain maps to 163–248; sequence GDRVVLDFAG…VKEVAEGVLP (86 aa).

The protein belongs to the FKBP-type PPIase family. Tig subfamily.

It is found in the cytoplasm. The catalysed reaction is [protein]-peptidylproline (omega=180) = [protein]-peptidylproline (omega=0). Its function is as follows. Involved in protein export. Acts as a chaperone by maintaining the newly synthesized protein in an open conformation. Functions as a peptidyl-prolyl cis-trans isomerase. The protein is Trigger factor of Bordetella parapertussis (strain 12822 / ATCC BAA-587 / NCTC 13253).